The following is an 88-amino-acid chain: UPF0250 protein Shew_2940 (88 aa).

This sequence belongs to the UPF0250 family.

The chain is UPF0250 protein Shew_2940 from Shewanella loihica (strain ATCC BAA-1088 / PV-4).